We begin with the raw amino-acid sequence, 261 residues long: Glucosamine-6-phosphate deaminase (261 aa).

The active-site Proton acceptor; for enolization step is the D67. D136 functions as the For ring-opening step in the catalytic mechanism. Catalysis depends on H138, which acts as the Proton acceptor; for ring-opening step. E143 (for ring-opening step) is an active-site residue.

This sequence belongs to the glucosamine/galactosamine-6-phosphate isomerase family. NagB subfamily.

It catalyses the reaction alpha-D-glucosamine 6-phosphate + H2O = beta-D-fructose 6-phosphate + NH4(+). It participates in amino-sugar metabolism; N-acetylneuraminate degradation; D-fructose 6-phosphate from N-acetylneuraminate: step 5/5. Its function is as follows. Catalyzes the reversible isomerization-deamination of glucosamine 6-phosphate (GlcN6P) to form fructose 6-phosphate (Fru6P) and ammonium ion. The sequence is that of Glucosamine-6-phosphate deaminase from Mycolicibacterium smegmatis (strain ATCC 700084 / mc(2)155) (Mycobacterium smegmatis).